The sequence spans 459 residues: 3-carboxy-cis,cis-muconate cycloisomerase (459 aa).

This sequence belongs to the class-II fumarase/aspartase family. As to quaternary structure, homotetramer.

It is found in the cytoplasm. It catalyses the reaction 2-(carboxymethyl)-5-oxo-2,5-dihydro-2-furoate = 3-carboxy-cis,cis-muconate + H(+). It functions in the pathway aromatic compound metabolism; beta-ketoadipate pathway; 5-oxo-4,5-dihydro-2-furylacetate from 3-carboxy-cis,cis-muconate: step 1/2. In terms of biological role, catalyzes an anti cycloisomerization. The sequence is that of 3-carboxy-cis,cis-muconate cycloisomerase (pcaB) from Pseudomonas aeruginosa (strain ATCC 15692 / DSM 22644 / CIP 104116 / JCM 14847 / LMG 12228 / 1C / PRS 101 / PAO1).